The following is a 237-amino-acid chain: Ribosomal RNA small subunit methyltransferase G (237 aa).

S-adenosyl-L-methionine is bound by residues Gly-78, Phe-83, 129 to 130, and Arg-148; that span reads AE.

The protein belongs to the methyltransferase superfamily. RNA methyltransferase RsmG family.

The protein resides in the cytoplasm. Specifically methylates the N7 position of a guanine in 16S rRNA. The polypeptide is Ribosomal RNA small subunit methyltransferase G (Streptococcus thermophilus (strain ATCC BAA-491 / LMD-9)).